The following is a 358-amino-acid chain: Src kinase-associated phosphoprotein 2 (358 aa).

A phosphoserine mark is found at S5 and S6. A disordered region spans residues 62 to 88; the sequence is ESQDKGDAEDGEEYDDPFAGPPDTISL. A Phosphotyrosine modification is found at Y75. A phosphoserine mark is found at S87 and S90. The region spanning 116 to 219 is the PH domain; the sequence is FVLKAGYLEK…WVQQLNFVLQ (104 aa). Phosphotyrosine is present on residues Y151 and Y197. S223 is subject to Phosphoserine. Positions 232 to 254 are disordered; sequence ERGELYDDVDHPLPSSSPTRSLP. Residues 243-253 show a composition bias toward low complexity; that stretch reads PLPSSSPTRSL. Y260 bears the Phosphotyrosine mark. Residues S282 and S285 each carry the phosphoserine modification. The SH3 domain maps to 296–357; the sequence is NYANFYQGLW…PKAYVMEMYD (62 aa).

It belongs to the SKAP family. As to quaternary structure, interacts with FYB1, which is required for SKAP2 protein stability. Interacts with PTPNS1. Part of a complex consisting of SKAP2, FYB1 and PTPNS1. Part of a complex consisting of SKAP2, FYB1 and LILRB3. Interacts with LAT, GRB2, PTK2B and PRAM1. May interact with actin. May interact with FYN, HCK and LYN. Interacts with FASLG.

The protein resides in the cytoplasm. Functionally, may be involved in B-cell and macrophage adhesion processes. In B-cells, may act by coupling the B-cell receptor (BCR) to integrin activation. May play a role in src signaling pathway. The chain is Src kinase-associated phosphoprotein 2 (SKAP2) from Bos taurus (Bovine).